The chain runs to 260 residues: Putative imidazole glycerol phosphate synthase subunit hisF3 (260 aa).

Asp135 is a catalytic residue.

The protein belongs to the HisA/HisF family. In terms of assembly, heterodimer of HisH and HisF.

The protein resides in the cytoplasm. It carries out the reaction 5-[(5-phospho-1-deoxy-D-ribulos-1-ylimino)methylamino]-1-(5-phospho-beta-D-ribosyl)imidazole-4-carboxamide + L-glutamine = D-erythro-1-(imidazol-4-yl)glycerol 3-phosphate + 5-amino-1-(5-phospho-beta-D-ribosyl)imidazole-4-carboxamide + L-glutamate + H(+). It participates in amino-acid biosynthesis; L-histidine biosynthesis; L-histidine from 5-phospho-alpha-D-ribose 1-diphosphate: step 5/9. IGPS catalyzes the conversion of PRFAR and glutamine to IGP, AICAR and glutamate. The HisF subunit catalyzes the cyclization activity that produces IGP and AICAR from PRFAR using the ammonia provided by the HisH subunit. This chain is Putative imidazole glycerol phosphate synthase subunit hisF3 (hisF3), found in Vibrio vulnificus (strain YJ016).